The primary structure comprises 142 residues: Nucleoside diphosphate kinase (142 aa).

The ATP site is built by Lys9, Phe57, Arg85, Thr91, Arg102, and Asn112. The tract at residues 87-106 (AMGATDPAKSEKGTVRGDLG) is disordered. Catalysis depends on His115, which acts as the Pros-phosphohistidine intermediate.

Belongs to the NDK family. In terms of assembly, homotetramer. It depends on Mg(2+) as a cofactor.

The protein localises to the cytoplasm. The enzyme catalyses a 2'-deoxyribonucleoside 5'-diphosphate + ATP = a 2'-deoxyribonucleoside 5'-triphosphate + ADP. It catalyses the reaction a ribonucleoside 5'-diphosphate + ATP = a ribonucleoside 5'-triphosphate + ADP. In terms of biological role, major role in the synthesis of nucleoside triphosphates other than ATP. The ATP gamma phosphate is transferred to the NDP beta phosphate via a ping-pong mechanism, using a phosphorylated active-site intermediate. In Dehalococcoides mccartyi (strain ATCC BAA-2266 / KCTC 15142 / 195) (Dehalococcoides ethenogenes (strain 195)), this protein is Nucleoside diphosphate kinase.